The sequence spans 279 residues: Protein K1 (279 aa).

The first 18 residues, 1-18 (MFLYVVCSLAVCFRGLLS), serve as a signal peptide directing secretion. Residues 19 to 220 (LSLQSSPNLC…TYLYIQEHLL (202 aa)) are Extracellular-facing. A helical membrane pass occupies residues 221–241 (VFMTLVALIGTMCGILGTIIF). Residues 242–279 (AHCQKQRDSNKTVPQQLQDYYSLHDLCTEDYTQPVDWY) are Cytoplasmic-facing.

As to quaternary structure, homooligomer.

It localises to the host membrane. In terms of biological role, promotes host cell survival pathways and may contribute to pathogenesis by preventing infected cells from undergoing apoptosis. Acts in host B-cells by mimicking the activated B-cell receptor complex. The cytoplasmic tail of K1 can induce the phosphorylation of a number of different kinases, leading to the activation of survival signaling pathways. This Human herpesvirus 8 type P (isolate GK18) (HHV-8) protein is Protein K1 (K1).